Here is a 278-residue protein sequence, read N- to C-terminus: Large ribosomal subunit protein uL2c (278 aa).

The interval 224–256 is disordered; it reads NPVDHPHGGGEGRAPIGRKKPTTPWGYPALGRK.

This sequence belongs to the universal ribosomal protein uL2 family. Part of the 50S ribosomal subunit.

It is found in the plastid. The chain is Large ribosomal subunit protein uL2c (rpl2) from Cuscuta exaltata (Tall dodder).